A 204-amino-acid polypeptide reads, in one-letter code: Protein GrpE (204 aa).

A compositionally biased stretch (basic and acidic residues) spans 1-12 (MSNQEKKMHEEE). The segment at 1–37 (MSNQEKKMHEEELQQQETVEADTEAEAEAVGTDADIE) is disordered.

This sequence belongs to the GrpE family. In terms of assembly, homodimer.

It localises to the cytoplasm. In terms of biological role, participates actively in the response to hyperosmotic and heat shock by preventing the aggregation of stress-denatured proteins, in association with DnaK and GrpE. It is the nucleotide exchange factor for DnaK and may function as a thermosensor. Unfolded proteins bind initially to DnaJ; upon interaction with the DnaJ-bound protein, DnaK hydrolyzes its bound ATP, resulting in the formation of a stable complex. GrpE releases ADP from DnaK; ATP binding to DnaK triggers the release of the substrate protein, thus completing the reaction cycle. Several rounds of ATP-dependent interactions between DnaJ, DnaK and GrpE are required for fully efficient folding. This Vibrio proteolyticus (Aeromonas proteolytica) protein is Protein GrpE.